Consider the following 352-residue polypeptide: GTPase Obg (352 aa).

One can recognise an Obg domain in the interval Met-1–Leu-159. The 168-residue stretch at Ala-160–Pro-327 folds into the OBG-type G domain. GTP-binding positions include Gly-166–Ser-173, Phe-191–Val-195, Asp-212–Gly-215, Asn-279–Asp-282, and Ser-308–Ala-310. 2 residues coordinate Mg(2+): Ser-173 and Thr-193. Residues Ser-329–Ile-352 are disordered. Acidic residues predominate over residues Val-339–Ile-352.

Belongs to the TRAFAC class OBG-HflX-like GTPase superfamily. OBG GTPase family. In terms of assembly, monomer. Mg(2+) is required as a cofactor.

The protein localises to the cytoplasm. Its function is as follows. An essential GTPase which binds GTP, GDP and possibly (p)ppGpp with moderate affinity, with high nucleotide exchange rates and a fairly low GTP hydrolysis rate. Plays a role in control of the cell cycle, stress response, ribosome biogenesis and in those bacteria that undergo differentiation, in morphogenesis control. This chain is GTPase Obg, found in Erythrobacter litoralis (strain HTCC2594).